We begin with the raw amino-acid sequence, 237 residues long: 2,3-bisphosphoglycerate-dependent phosphoglycerate mutase (237 aa).

Residues 10–17 (RHGESKWN), 23–24 (TG), Arg62, 89–92 (ERHY), Lys100, 116–117 (RR), and 185–186 (GN) contribute to the substrate site. His11 (tele-phosphohistidine intermediate) is an active-site residue. Glu89 serves as the catalytic Proton donor/acceptor.

The protein belongs to the phosphoglycerate mutase family. BPG-dependent PGAM subfamily. In terms of assembly, homodimer.

The catalysed reaction is (2R)-2-phosphoglycerate = (2R)-3-phosphoglycerate. Its pathway is carbohydrate degradation; glycolysis; pyruvate from D-glyceraldehyde 3-phosphate: step 3/5. Catalyzes the interconversion of 2-phosphoglycerate and 3-phosphoglycerate. In Baumannia cicadellinicola subsp. Homalodisca coagulata, this protein is 2,3-bisphosphoglycerate-dependent phosphoglycerate mutase.